A 238-amino-acid chain; its full sequence is Nucleoside diphosphate kinase III, chloroplastic/mitochondrial (238 aa).

The N-terminal 85 residues, 1 to 85 (MSSQICRSAS…YMIQDQEVLA (85 aa)), are a transit peptide targeting the chloroplast and mitochondrion. ATP contacts are provided by K96, F144, R172, T178, R189, and N199. Catalysis depends on H202, which acts as the Pros-phosphohistidine intermediate.

The protein belongs to the NDK family. Homohexamer. Mg(2+) is required as a cofactor.

It is found in the plastid. Its subcellular location is the chloroplast thylakoid lumen. The protein resides in the mitochondrion intermembrane space. It carries out the reaction a 2'-deoxyribonucleoside 5'-diphosphate + ATP = a 2'-deoxyribonucleoside 5'-triphosphate + ADP. The catalysed reaction is a ribonucleoside 5'-diphosphate + ATP = a ribonucleoside 5'-triphosphate + ADP. Functionally, major role in the synthesis of nucleoside triphosphates other than ATP. The ATP gamma phosphate is transferred to the NDP beta phosphate via a ping-pong mechanism, using a phosphorylated active-site intermediate. Shows the highest specificity towards GDP. The protein is Nucleoside diphosphate kinase III, chloroplastic/mitochondrial (NDPK3) of Arabidopsis thaliana (Mouse-ear cress).